Reading from the N-terminus, the 96-residue chain is UPF0235 protein YggU (96 aa).

This sequence belongs to the UPF0235 family.

This chain is UPF0235 protein YggU, found in Shigella flexneri.